Here is a 153-residue protein sequence, read N- to C-terminus: Succinate dehydrogenase assembly factor 2, mitochondrial (153 aa).

This sequence belongs to the SDHAF2 family. As to quaternary structure, interacts with the flavoprotein subunit within the SDH catalytic dimer.

The protein resides in the mitochondrion matrix. Plays an essential role in the assembly of succinate dehydrogenase (SDH), an enzyme complex (also referred to as respiratory complex II) that is a component of both the tricarboxylic acid (TCA) cycle and the mitochondrial electron transport chain, and which couples the oxidation of succinate to fumarate with the reduction of ubiquinone (coenzyme Q) to ubiquinol. Required for flavinylation (covalent attachment of FAD) of the flavoprotein subunit of the SDH catalytic dimer. The protein is Succinate dehydrogenase assembly factor 2, mitochondrial of Candida glabrata (strain ATCC 2001 / BCRC 20586 / JCM 3761 / NBRC 0622 / NRRL Y-65 / CBS 138) (Yeast).